A 152-amino-acid chain; its full sequence is Nucleoside diphosphate kinase A 2 (152 aa).

Positions 12, 60, 88, 94, 105, and 115 each coordinate ATP. H118 serves as the catalytic Pros-phosphohistidine intermediate.

Belongs to the NDK family. In terms of assembly, homohexamer. The cofactor is Mg(2+). The N-terminus is blocked.

Its subcellular location is the cytoplasm. It localises to the cell membrane. The protein localises to the nucleus. It carries out the reaction a 2'-deoxyribonucleoside 5'-diphosphate + ATP = a 2'-deoxyribonucleoside 5'-triphosphate + ADP. It catalyses the reaction a ribonucleoside 5'-diphosphate + ATP = a ribonucleoside 5'-triphosphate + ADP. With respect to regulation, autophosphorylation at His-118 increases serine/threonine protein kinase activity of the enzyme. Interaction with the SET complex inhibits exonuclease activity. In terms of biological role, major role in the synthesis of nucleoside triphosphates other than ATP. Possesses nucleoside-diphosphate kinase, serine/threonine-specific protein kinase, geranyl and farnesyl pyrophosphate kinase, histidine protein kinase and 3'-5' exonuclease activities. Involved in cell proliferation, differentiation and development, signal transduction, G protein-coupled receptor endocytosis, and gene expression. Required for neural development including neural patterning and cell fate determination. The chain is Nucleoside diphosphate kinase A 2 (NME1-2) from Bos taurus (Bovine).